A 158-amino-acid polypeptide reads, in one-letter code: Transcription elongation factor GreA (158 aa).

The stretch at 47–74 (AEYHAAKEEQSHNEGRIAELEDKLARAD) forms a coiled coil.

The protein belongs to the GreA/GreB family.

In terms of biological role, necessary for efficient RNA polymerase transcription elongation past template-encoded arresting sites. The arresting sites in DNA have the property of trapping a certain fraction of elongating RNA polymerases that pass through, resulting in locked ternary complexes. Cleavage of the nascent transcript by cleavage factors such as GreA or GreB allows the resumption of elongation from the new 3'terminus. GreA releases sequences of 2 to 3 nucleotides. The polypeptide is Transcription elongation factor GreA (Bradyrhizobium sp. (strain BTAi1 / ATCC BAA-1182)).